A 1463-amino-acid polypeptide reads, in one-letter code: Chitin binding domain (ChtBD2) containing chtb-1 (1463 aa).

The N-terminal stretch at 1–17 (MLRNLILITLLVASGHG) is a signal peptide. The segment at 70–99 (SSVPSVPAENTQPQQHPKARKPASPNICEQ) is disordered. One can recognise a Chitin-binding type-2 domain in the interval 94–164 (PNICEQDNGA…IVPKRMSSLS (71 aa)). A disulfide bond links Cys141 and Cys154. 2 disordered regions span residues 720 to 773 (IDSD…DFPI) and 841 to 869 (KNPK…FPDS). Positions 722-734 (SDTNSTTNPSQPE) are enriched in polar residues. Basic residues-rich tracts occupy residues 740–756 (NNTK…KPKK) and 843–853 (PKKRKTKRRKQ).

This is Chitin binding domain (ChtBD2) containing chtb-1 from Caenorhabditis elegans.